The following is a 304-amino-acid chain: Dihydroorotate dehydrogenase B (NAD(+)), catalytic subunit (304 aa).

FMN-binding positions include S21 and 45-46 (KA). Residues K45 and 69–73 (NAIGL) contribute to the substrate site. Positions 99 and 127 each coordinate FMN. N127 contacts substrate. C130 functions as the Nucleophile in the catalytic mechanism. FMN contacts are provided by K165 and I191. Residue 192-193 (NT) participates in substrate binding. FMN-binding positions include G217, 243 to 244 (GG), and 265 to 266 (GT).

Belongs to the dihydroorotate dehydrogenase family. Type 1 subfamily. In terms of assembly, heterotetramer of 2 PyrK and 2 PyrD type B subunits. The cofactor is FMN.

The protein localises to the cytoplasm. It catalyses the reaction (S)-dihydroorotate + NAD(+) = orotate + NADH + H(+). It participates in pyrimidine metabolism; UMP biosynthesis via de novo pathway; orotate from (S)-dihydroorotate (NAD(+) route): step 1/1. Functionally, catalyzes the conversion of dihydroorotate to orotate with NAD(+) as electron acceptor. This chain is Dihydroorotate dehydrogenase B (NAD(+)), catalytic subunit (pyrD), found in Listeria monocytogenes serotype 4b (strain F2365).